A 498-amino-acid polypeptide reads, in one-letter code: Cytochrome P450 monooxygenase astB (498 aa).

The helical transmembrane segment at 7-27 (FTTMPVVLLVGLVLYQLLAFT) threads the bilayer. Residues Asn-237, Asn-248, and Asn-346 are each glycosylated (N-linked (GlcNAc...) asparagine). Residue Cys-425 coordinates heme.

Belongs to the cytochrome P450 family. Requires heme as cofactor.

The protein resides in the membrane. The enzyme catalyses preasperterpenoid A + 4 reduced [NADPH--hemoprotein reductase] + 4 O2 = asperterpenoid A + 4 oxidized [NADPH--hemoprotein reductase] + 5 H2O + 5 H(+). It carries out the reaction asperterpenoid A + 2 reduced [NADPH--hemoprotein reductase] + 2 O2 = asperterpenoid B + 2 oxidized [NADPH--hemoprotein reductase] + 3 H2O + 3 H(+). Its pathway is secondary metabolite biosynthesis; terpenoid biosynthesis. In terms of biological role, cytochrome P450 monooxygenase; part of the gene cluster that mediates the biosynthesis of the asperterpenoids, sesterterpenes that exhibit anti-tuberculosis activity. The first step of the pathway is performed by the sesterterpene synthase astC that possesses both prenyl transferase and terpene cyclase activity, converting isopentenyl diphosphate and dimethylallyl diphosphate into geranylfarnesyl diphosphate (GFPP) and further converting GFPP into preasperterpenoid A, respectively. The cytochrome P450 monooxygenase astB then dually oxidizes preasperterpenoid A to produce asperterpenoid A along with a minor product, asperterpenoid B. Finally, the cytochrome P450 monooxygenase astA converts asperterpenoid A into asperterpenoid C. The protein is Cytochrome P450 monooxygenase astB of Talaromyces wortmannii (Penicillium wortmannii).